The chain runs to 273 residues: NAD-dependent protein deacylase (273 aa).

The Deacetylase sirtuin-type domain maps to 20–272 (RERLRQRIFF…PEFVEKLLEG (253 aa)). 48 to 67 (GAGISAESGIRTFRAADGLW) is a binding site for NAD(+). Y92 and R95 together coordinate substrate. 129-132 (QNID) is a binding site for NAD(+). H147 (proton acceptor) is an active-site residue. The Zn(2+) site is built by C155 and C174. NAD(+) contacts are provided by residues 214–216 (GTS), 240–242 (NLE), and A258.

Belongs to the sirtuin family. Class III subfamily. It depends on Zn(2+) as a cofactor.

Its subcellular location is the cytoplasm. It catalyses the reaction N(6)-acetyl-L-lysyl-[protein] + NAD(+) + H2O = 2''-O-acetyl-ADP-D-ribose + nicotinamide + L-lysyl-[protein]. The enzyme catalyses N(6)-succinyl-L-lysyl-[protein] + NAD(+) + H2O = 2''-O-succinyl-ADP-D-ribose + nicotinamide + L-lysyl-[protein]. It carries out the reaction N(6)-(2-hydroxyisobutanoyl)-L-lysyl-[protein] + NAD(+) + H2O = 2''-O-(2-hydroxyisobutanoyl)-ADP-D-ribose + nicotinamide + L-lysyl-[protein]. Its function is as follows. NAD-dependent lysine deacetylase that specifically removes acetyl groups on target proteins. Also acts as a protein-lysine deacylase by mediating protein desuccinylation and de-2-hydroxyisobutyrylation. Modulates the activities of several proteins which are inactive in their acylated form. This Shigella flexneri protein is NAD-dependent protein deacylase.